Reading from the N-terminus, the 601-residue chain is Elongation factor 4 (601 aa).

In terms of domain architecture, tr-type G spans 5 to 187; sequence IRKKNFCIIA…AICKYVPSPK (183 aa). Residues 17-22 and 134-137 contribute to the GTP site; these read DHGKST and NKID.

The protein belongs to the TRAFAC class translation factor GTPase superfamily. Classic translation factor GTPase family. LepA subfamily.

It localises to the cell inner membrane. The catalysed reaction is GTP + H2O = GDP + phosphate + H(+). In terms of biological role, required for accurate and efficient protein synthesis under certain stress conditions. May act as a fidelity factor of the translation reaction, by catalyzing a one-codon backward translocation of tRNAs on improperly translocated ribosomes. Back-translocation proceeds from a post-translocation (POST) complex to a pre-translocation (PRE) complex, thus giving elongation factor G a second chance to translocate the tRNAs correctly. Binds to ribosomes in a GTP-dependent manner. The sequence is that of Elongation factor 4 from Borreliella afzelii (strain PKo) (Borrelia afzelii).